Consider the following 462-residue polypeptide: Coagulation factor IX (462 aa).

Positions 1 to 21 (MADAPGLIPIFLLGYLLSTEC) are cleaved as a signal peptide. The propeptide occupies 22 to 39 (AVFLDRENATKILTRPKR). Positions 40, 41, 46, 47, 54, 56, 59, 60, 65, 66, and 69 each coordinate Ca(2+). Residues 40 to 86 (YNSGKLEEFVQGNLERECIEERCSFEEAREVFENTEKTTEFWKQYVD) form the Gla domain. Glu46, Glu47, Glu54, Glu56, Glu59, Glu60, Glu65, Glu66, Glu69, Glu72, and Glu75 each carry 4-carboxyglutamate. Glu54 provides a ligand contact to Mg(2+). Cys57 and Cys62 form a disulfide bridge. Glu59 lines the Mg(2+) pocket. Residue Glu65 coordinates Mg(2+). Residue Glu69 coordinates Mg(2+). Glu75 contacts Ca(2+). Glu75 lines the Mg(2+) pocket. Thr78 carries an O-linked (GalNAc...) threonine glycan. Residues Glu79, Asp86, Gly87, and Gln89 each contribute to the Ca(2+) site. A 4-carboxyglutamate modification is found at Glu79. Glu79 is a binding site for Mg(2+). An EGF-like; calcium-binding domain is found at 86–122 (DGDQCESNPCLNGGICKDDINSYECWCQAGFEGRNCE). Disulfide bonds link Cys90–Cys101, Cys95–Cys110, Cys112–Cys121, Cys127–Cys138, Cys134–Cys148, Cys150–Cys163, Cys171–Cys336, Cys253–Cys269, Cys383–Cys397, and Cys408–Cys436. Residue Ser92 is glycosylated (O-linked (Glc...) serine). The Ca(2+) site is built by Asp103 and Asp104. Residue Asp103 is modified to (3R)-3-hydroxyaspartate. Residue Ser107 is modified to Phosphoserine. Residues 186 to 227 (AETVFSNTDYGNSTELILDDITNSTILDNLTENSEPINDFTR) constitute a propeptide, activation peptide. Tyr195 is modified (sulfotyrosine). Ser198 bears the Phosphoserine mark. Position 199 is a phosphothreonine; alternate (Thr199). An O-linked (GalNAc...) threonine; alternate glycan is attached at Thr199. Asn208 and Asn214 each carry an N-linked (GlcNAc...) asparagine glycan. Thr216 and Thr226 each carry an O-linked (GalNAc...) threonine glycan. The Peptidase S1 domain maps to 228-460 (VVGGENAKPG…YVNWIKEKTK (233 aa)). The active-site Charge relay system is His268. Residues Glu282, Asn284, Glu287, Glu289, and Glu292 each contribute to the Ca(2+) site. Residue Asn307 is glycosylated (N-linked (GlcNAc...) asparagine). The active-site Charge relay system is the Asp316. The Charge relay system role is filled by Ser412.

This sequence belongs to the peptidase S1 family. As to quaternary structure, heterodimer of a light chain and a heavy chain; disulfide-linked. Interacts (inactive and activated) with F11 (activated) in calcium-dependent manner. Interacts with SERPINC1. Interacts (inactive and activated) with nitrophorin-2, an anticoagulant protein from Rhodnius prolixus. Activated by factor XIa, which excises the activation peptide. The propeptide can also be removed by snake venom protease. Activated by coagulation factor VIIa-tissue factor (F7-F3) complex in calcium-dependent manner. In terms of processing, the iron and 2-oxoglutarate dependent 3-hydroxylation of aspartate and asparagine is (R) stereospecific within EGF domains. Post-translationally, predominantly O-glucosylated at Ser-92 by POGLUT1 in vitro.

It localises to the secreted. The catalysed reaction is Selective cleavage of Arg-|-Ile bond in factor X to form factor Xa.. Functionally, factor IX is a vitamin K-dependent plasma protein that participates in the intrinsic pathway of blood coagulation by converting factor X to its active form in the presence of Ca(2+) ions, phospholipids, and factor VIIIa. The chain is Coagulation factor IX (F9) from Rattus norvegicus (Rat).